A 382-amino-acid polypeptide reads, in one-letter code: Galactokinase (382 aa).

34-37 (EHTD) serves as a coordination point for substrate. 124–130 (GAGLSSS) is a binding site for ATP. Mg(2+) contacts are provided by S130 and E162. D174 acts as the Proton acceptor in catalysis. Y223 lines the substrate pocket.

This sequence belongs to the GHMP kinase family. GalK subfamily.

It is found in the cytoplasm. The catalysed reaction is alpha-D-galactose + ATP = alpha-D-galactose 1-phosphate + ADP + H(+). It participates in carbohydrate metabolism; galactose metabolism. In terms of biological role, catalyzes the transfer of the gamma-phosphate of ATP to D-galactose to form alpha-D-galactose-1-phosphate (Gal-1-P). This is Galactokinase from Shigella dysenteriae serotype 1 (strain Sd197).